Reading from the N-terminus, the 187-residue chain is Threonylcarbamoyl-AMP synthase (187 aa).

One can recognise a YrdC-like domain in the interval 4-187; it reads TPDLDAAVAT…DARTGQILRD (184 aa).

The protein belongs to the SUA5 family. TsaC subfamily.

The protein localises to the cytoplasm. The enzyme catalyses L-threonine + hydrogencarbonate + ATP = L-threonylcarbamoyladenylate + diphosphate + H2O. Required for the formation of a threonylcarbamoyl group on adenosine at position 37 (t(6)A37) in tRNAs that read codons beginning with adenine. Catalyzes the conversion of L-threonine, HCO(3)(-)/CO(2) and ATP to give threonylcarbamoyl-AMP (TC-AMP) as the acyladenylate intermediate, with the release of diphosphate. This is Threonylcarbamoyl-AMP synthase from Xanthomonas campestris pv. campestris (strain 8004).